The sequence spans 241 residues: CD99 antigen-like protein 2 (241 aa).

The first 23 residues, 1 to 23, serve as a signal peptide directing secretion; the sequence is MAKWGSPFVFALACLALSWRVYG. The Extracellular segment spans residues 24–173; it reads DDFDLYDALG…TGFGSQAETG (150 aa). Residues 30 to 168 are disordered; it reads DALGDPTEKP…NDGSDTGFGS (139 aa). Positions 143 to 154 are enriched in gly residues; the sequence is GGGGGGGGGRAT. The helical transmembrane segment at 174 to 196 threads the bilayer; the sequence is TIAGIASALAMALIGAVSSYISY. Residues 197–241 are Cytoplasmic-facing; it reads QQKKFCFSIQEGLNAEYVKGEHMEAVVSEEPQVKYSVVESQSAIP.

The protein belongs to the CD99 family.

It is found in the cell membrane. The protein localises to the cell junction. In terms of biological role, may function as a homophilic adhesion molecule. In Xenopus tropicalis (Western clawed frog), this protein is CD99 antigen-like protein 2 (cd99l2).